Consider the following 118-residue polypeptide: Large ribosomal subunit protein uL18 (118 aa).

This sequence belongs to the universal ribosomal protein uL18 family. In terms of assembly, part of the 50S ribosomal subunit; part of the 5S rRNA/L5/L18/L25 subcomplex. Contacts the 5S and 23S rRNAs.

Its function is as follows. This is one of the proteins that bind and probably mediate the attachment of the 5S RNA into the large ribosomal subunit, where it forms part of the central protuberance. This is Large ribosomal subunit protein uL18 from Rickettsia akari (strain Hartford).